A 141-amino-acid chain; its full sequence is Ribonuclease P protein component (141 aa).

Disordered regions lie at residues 37 to 56 (RTEE…VGFT) and 114 to 141 (RRIT…VNGK). The segment covering 114 to 124 (RRITAKGERRS) has biased composition (basic and acidic residues).

It belongs to the RnpA family. Consists of a catalytic RNA component (M1 or rnpB) and a protein subunit.

It catalyses the reaction Endonucleolytic cleavage of RNA, removing 5'-extranucleotides from tRNA precursor.. In terms of biological role, RNaseP catalyzes the removal of the 5'-leader sequence from pre-tRNA to produce the mature 5'-terminus. It can also cleave other RNA substrates such as 4.5S RNA. The protein component plays an auxiliary but essential role in vivo by binding to the 5'-leader sequence and broadening the substrate specificity of the ribozyme. The protein is Ribonuclease P protein component of Brucella melitensis biotype 1 (strain ATCC 23456 / CCUG 17765 / NCTC 10094 / 16M).